The chain runs to 194 residues: MIILGVDPGLTRCGVGVIEAGEHRRLSFIHVDVVRSSPDITQDLRLLAIYNGLSEKMDRFAPDAVSIERVFAQSNRNTVLGTAQAAGLAMLAAAQRNIPVALHTPTEAKLAITGNGQAQKIQVERMVTRILNLTKMPTPADAADALALAICHALRPAGALQGGEREQHLTAAQRQWAEAAQNSTRRRINHDRGM.

Residues Asp-7, Glu-68, and Asp-141 contribute to the active site. Mg(2+) contacts are provided by Asp-7, Glu-68, and Asp-141.

This sequence belongs to the RuvC family. In terms of assembly, homodimer which binds Holliday junction (HJ) DNA. The HJ becomes 2-fold symmetrical on binding to RuvC with unstacked arms; it has a different conformation from HJ DNA in complex with RuvA. In the full resolvosome a probable DNA-RuvA(4)-RuvB(12)-RuvC(2) complex forms which resolves the HJ. Mg(2+) is required as a cofactor.

The protein resides in the cytoplasm. It catalyses the reaction Endonucleolytic cleavage at a junction such as a reciprocal single-stranded crossover between two homologous DNA duplexes (Holliday junction).. The RuvA-RuvB-RuvC complex processes Holliday junction (HJ) DNA during genetic recombination and DNA repair. Endonuclease that resolves HJ intermediates. Cleaves cruciform DNA by making single-stranded nicks across the HJ at symmetrical positions within the homologous arms, yielding a 5'-phosphate and a 3'-hydroxyl group; requires a central core of homology in the junction. The consensus cleavage sequence is 5'-(A/T)TT(C/G)-3'. Cleavage occurs on the 3'-side of the TT dinucleotide at the point of strand exchange. HJ branch migration catalyzed by RuvA-RuvB allows RuvC to scan DNA until it finds its consensus sequence, where it cleaves and resolves the cruciform DNA. The protein is Crossover junction endodeoxyribonuclease RuvC of Bifidobacterium longum (strain DJO10A).